A 129-amino-acid chain; its full sequence is Thioredoxin H7 (129 aa).

A Thioredoxin domain is found at 6 to 129 (SSVHDVHSSM…LVKKIEQHRV (124 aa)). Catalysis depends on nucleophile residues Cys-55 and Cys-58. Cys-55 and Cys-58 form a disulfide bridge.

It belongs to the thioredoxin family. Plant H-type subfamily.

The protein resides in the cytoplasm. In terms of biological role, probable thiol-disulfide oxidoreductase that may be involved in the redox regulation of a number of cytosolic enzymes. This chain is Thioredoxin H7 (TRX7), found in Arabidopsis thaliana (Mouse-ear cress).